Here is a 218-residue protein sequence, read N- to C-terminus: Pyridoxine/pyridoxamine 5'-phosphate oxidase (218 aa).

Substrate-binding positions include 14–17 (RREY) and Lys72. FMN contacts are provided by residues 67–72 (RIVLLK), 82–83 (YT), Arg88, Lys89, and Gln111. Substrate contacts are provided by Tyr129, Arg133, and Ser137. FMN-binding positions include 146–147 (QS) and Trp191. A substrate-binding site is contributed by 197 to 199 (RLH). Arg201 is a binding site for FMN.

This sequence belongs to the pyridoxamine 5'-phosphate oxidase family. As to quaternary structure, homodimer. FMN is required as a cofactor.

It carries out the reaction pyridoxamine 5'-phosphate + O2 + H2O = pyridoxal 5'-phosphate + H2O2 + NH4(+). The catalysed reaction is pyridoxine 5'-phosphate + O2 = pyridoxal 5'-phosphate + H2O2. Its pathway is cofactor metabolism; pyridoxal 5'-phosphate salvage; pyridoxal 5'-phosphate from pyridoxamine 5'-phosphate: step 1/1. It functions in the pathway cofactor metabolism; pyridoxal 5'-phosphate salvage; pyridoxal 5'-phosphate from pyridoxine 5'-phosphate: step 1/1. Catalyzes the oxidation of either pyridoxine 5'-phosphate (PNP) or pyridoxamine 5'-phosphate (PMP) into pyridoxal 5'-phosphate (PLP). The polypeptide is Pyridoxine/pyridoxamine 5'-phosphate oxidase (Klebsiella pneumoniae subsp. pneumoniae (strain ATCC 700721 / MGH 78578)).